The primary structure comprises 244 residues: Deoxynucleotide monophosphate kinase (244 aa).

Lys-10 provides a ligand contact to dGMP. Arg-11, Gly-13, Asp-15, and Thr-16 together coordinate ATP. 13 residues coordinate dGMP: Ile-36, Lys-37, Arg-70, Arg-137, Gly-144, Thr-145, Val-149, Trp-157, Asp-180, Arg-182, Gln-183, Glu-186, and Thr-213.

The protein belongs to the dNMP kinase family. As to quaternary structure, homodimer. Mg(2+) serves as cofactor.

The catalysed reaction is dTMP + ATP = dTDP + ADP. It catalyses the reaction dGMP + ATP = dGDP + ADP. The enzyme catalyses 5-hydroxymethyl-dCMP + ATP = 5-hydroxymethyl-dCDP + ADP. In terms of biological role, allows the synthesis of deoxyribonucleoside triphosphates necessary for the rapid viral DNA replication. Phosphorylates dGMP, dTMP and 5-hydroxymethyl-dCMP (hmdCMP) while excluding dCMP and dAMP. The phosphorylation of 5-hydroxymethyl-dCMP represents the first step in the replacement of cytosine by hydroxymethylcytosine in new viral DNA genomes. The polypeptide is Deoxynucleotide monophosphate kinase (1) (Escherichia phage RB69 (Bacteriophage RB69)).